We begin with the raw amino-acid sequence, 688 residues long: PTS system glucoside-specific EIICBA component (688 aa).

The region spanning 3–427 (KKLFGQLQRI…FKLKTPGRED (425 aa)) is the PTS EIIC type-1 domain. Transmembrane regions (helical) follow at residues 12–32 (IGKALMLPVAILPAAGILLAF), 81–101 (LGLAGGDGVAALAALVGYLIM), 137–157 (LVLGIPTLQTGVFGGIIMGAL), 182–202 (FVPIVTSVVAIATGVLLSFAW), 223–243 (LTTFIFGIIERSLIPFGLHHI), 284–304 (AFTTGKYPFMMFGLPAAAFAI), 315–335 (VVGGLMLSAGLTAFLTGITEP), 340–360 (FLFVAPVLYGIHVLLAGTSFL), 364–384 (LLGVKIGMTFSGGFIDYILYG), and 395–415 (LVIPVGIVYAIVYYFLFDFAI). Residues 438–519 (AKLPFDVLDA…AKIMSGEITK (82 aa)) enclose the PTS EIIB type-1 domain. Cys460 functions as the Phosphocysteine intermediate; for EIIB activity in the catalytic mechanism. One can recognise a PTS EIIA type-1 domain in the interval 560-664 (DQVFAGKMMG…SIVTPMIITN (105 aa)). The active-site Tele-phosphohistidine intermediate; for EIIA activity is the His612.

It localises to the cell membrane. In terms of biological role, the phosphoenolpyruvate-dependent sugar phosphotransferase system (sugar PTS), a major carbohydrate active -transport system, catalyzes the phosphorylation of incoming sugar substrates concomitantly with their translocation across the cell membrane. This system is involved in alpha- and beta-glucoside transport. This chain is PTS system glucoside-specific EIICBA component (glcB), found in Staphylococcus aureus (strain Mu3 / ATCC 700698).